A 113-amino-acid chain; its full sequence is Large ribosomal subunit protein bL19 (113 aa).

It belongs to the bacterial ribosomal protein bL19 family.

In terms of biological role, this protein is located at the 30S-50S ribosomal subunit interface and may play a role in the structure and function of the aminoacyl-tRNA binding site. The sequence is that of Large ribosomal subunit protein bL19 from Corynebacterium kroppenstedtii (strain DSM 44385 / JCM 11950 / CIP 105744 / CCUG 35717).